An 828-amino-acid chain; its full sequence is G-type lectin S-receptor-like serine/threonine-protein kinase At2g19130 (828 aa).

An N-terminal signal peptide occupies residues 1–22 (MVSFLTLTSFFFICFFIHGSSA). The region spanning 23-146 (VDTISGDFTL…GSSLSANVLW (124 aa)) is the Bulb-type lectin domain. Residues 23 to 439 (VDTISGDFTL…GASGKSNNKG (417 aa)) are Extracellular-facing. N-linked (GlcNAc...) asparagine glycans are attached at residues asparagine 85, asparagine 113, asparagine 203, asparagine 234, asparagine 240, and asparagine 255. The region spanning 286–322 (PRQQCQVYRYCGSFGICSDKSEPFCRCPQGFRPMSQK) is the EGF-like domain. 4 disulfides stabilise this stretch: cysteine 290–cysteine 302, cysteine 296–cysteine 310, cysteine 372–cysteine 394, and cysteine 376–cysteine 382. Residues 341-422 (CSRGDINQFF…EGNIFYLRLA (82 aa)) form the PAN domain. The helical transmembrane segment at 440–460 (LIFGAVLGSLGVIVLVLLVVI) threads the bilayer. The Cytoplasmic portion of the chain corresponds to 461 to 828 (LILRYRRRKR…KKMTNDNSSA (368 aa)). Residues 493–770 (KNFSDKLGGG…QVVQILEGVL (278 aa)) enclose the Protein kinase domain. ATP-binding positions include 499–507 (LGGGGFGSV) and lysine 521. The residue at position 527 (serine 527) is a Phosphoserine. Residues 582–600 (VEEKIVLGWKLRFQIALGT) form a caM-binding region. The active-site Proton acceptor is aspartate 619. Threonine 653 carries the post-translational modification Phosphothreonine. Positions 796-828 (ESSSSSSHNSSQNHKHSSSSSSSKKMTNDNSSA) are disordered. Low complexity predominate over residues 797 to 828 (SSSSSSHNSSQNHKHSSSSSSSKKMTNDNSSA). Phosphoserine is present on serine 815.

This sequence belongs to the protein kinase superfamily. Ser/Thr protein kinase family.

Its subcellular location is the cell membrane. The enzyme catalyses L-seryl-[protein] + ATP = O-phospho-L-seryl-[protein] + ADP + H(+). It carries out the reaction L-threonyl-[protein] + ATP = O-phospho-L-threonyl-[protein] + ADP + H(+). The protein is G-type lectin S-receptor-like serine/threonine-protein kinase At2g19130 of Arabidopsis thaliana (Mouse-ear cress).